The sequence spans 868 residues: mRNA-capping enzyme (868 aa).

The active-site N6-GMP-lysine intermediate is the Lys282. An mRNA cap 0 methyltransferase domain is found at 594–868 (GIYRAQTALI…LFGFICLRKN (275 aa)). S-adenosyl-L-methionine contacts are provided by residues Lys607, Gly624, Asp646, and 710-712 (LFI).

In the N-terminal section; belongs to the dsDNA virus mRNA guanylyltransferase family. The protein in the C-terminal section; belongs to the class I-like SAM-binding methyltransferase superfamily. mRNA cap 0 methyltransferase family. In terms of assembly, part of the viral DNA-directed RNA polymerase that consists of 8 polII-like subunits (RPB1, RPB2, RPB3, RPB5, RPB6, RPB7, RPB9, RPB10), a capping enzyme and a termination factor.

Its subcellular location is the virion. It carries out the reaction a 5'-end triphospho-ribonucleoside in mRNA + H2O = a 5'-end diphospho-ribonucleoside in mRNA + phosphate + H(+). It catalyses the reaction a 5'-end diphospho-ribonucleoside in mRNA + GTP + H(+) = a 5'-end (5'-triphosphoguanosine)-ribonucleoside in mRNA + diphosphate. The enzyme catalyses a 5'-end (5'-triphosphoguanosine)-ribonucleoside in mRNA + S-adenosyl-L-methionine = a 5'-end (N(7)-methyl 5'-triphosphoguanosine)-ribonucleoside in mRNA + S-adenosyl-L-homocysteine. Its pathway is mRNA processing; mRNA capping. Functionally, probably catalyzes the second reaction in the mRNA cap formation pathway. Forms a covalent complex with GTP. This chain is mRNA-capping enzyme, found in African swine fever virus (isolate Tick/South Africa/Pretoriuskop Pr4/1996) (ASFV).